Here is a 185-residue protein sequence, read N- to C-terminus: Tetrahydromethanopterin S-methyltransferase subunit A 2 (185 aa).

Over 1–21 the chain is Cytoplasmic; sequence MVDKKVDKKPVPEDWPHIVGD. Residues 22–38 form a helical membrane-spanning segment; it reads YVVGDAESPVAVVTLGS. At 39 to 185 the chain is on the extracellular side; it reads HMEDEPVRAG…LNKNKPDENT (147 aa). 5-hydroxybenzimidazolylcob(I)amide is bound at residue H88.

The protein belongs to the MtrA family. The complex is composed of 8 subunits; MtrA, MtrB, MtrC, MtrD, MtrE, MtrF, MtrG and MtrH. It depends on 5-hydroxybenzimidazolylcob(I)amide as a cofactor.

The protein localises to the cell membrane. It carries out the reaction 5-methyl-5,6,7,8-tetrahydromethanopterin + coenzyme M + 2 Na(+)(in) = 5,6,7,8-tetrahydromethanopterin + methyl-coenzyme M + 2 Na(+)(out). It functions in the pathway one-carbon metabolism; methanogenesis from CO(2); methyl-coenzyme M from 5,10-methylene-5,6,7,8-tetrahydromethanopterin: step 2/2. In terms of biological role, part of a complex that catalyzes the formation of methyl-coenzyme M and tetrahydromethanopterin from coenzyme M and methyl-tetrahydromethanopterin. This is an energy-conserving, sodium-ion translocating step. The protein is Tetrahydromethanopterin S-methyltransferase subunit A 2 of Methanothermobacter marburgensis (strain ATCC BAA-927 / DSM 2133 / JCM 14651 / NBRC 100331 / OCM 82 / Marburg) (Methanobacterium thermoautotrophicum).